A 492-amino-acid polypeptide reads, in one-letter code: MDFLLGNPFSSPVGQRIEKATDGSLQSEDWALNMEICDIINETEEGPKDAFRAVKKRIMGNKNFHEVMLALTVLETCVKNCGHRFHVLVANQDFVENVLVRTILPKNNPPTIVHDKVLNLIQSWADAFRSSPDLTGVVAVYEDLRRKGLEFPMTDLDMLSPIHTPQRTVFNSETPSRQNSVSSNTSQRGDLSQHATPLPTPAVLPGDSPITPTPEQIGKLRSELEMVSGNVRVMSEMLTELVPTQVEPADLELLQELNRTCRAMQQRILELIPRISNEQLTEELLMINDNLNNVFLRHERFERFRTGQTAKASSEAELATDLIDMGPDPAATNNLSSQLAGMNLGSRSVRAGLQSLETSGHLEDDFDMFALTRGSSLADQRKGVKYEAPQTTDGLAGALDARQQSTGAIPATQARIMEDIEQWLSTDVGNSAEEPSGVTSEEFDKFLEERAKAADRLPNLASPSAEGPPRPSPGTAPRRKTQEKDDDMLFAL.

The residue at position 1 (Met1) is an N-acetylmethionine. The residue at position 11 (Ser11) is a Phosphoserine. Residues 20–152 (ATDGSLQSED…DLRRKGLEFP (133 aa)) enclose the VHS domain. The KRKK motif lies at 48–56 (KDAFRAVKK). The residue at position 160 (Ser160) is a Phosphoserine. The residue at position 164 (Thr164) is a Phosphothreonine. Residues 167–195 (RTVFNSETPSRQNSVSSNTSQRGDLSQHA) are compositionally biased toward polar residues. The tract at residues 167–215 (RTVFNSETPSRQNSVSSNTSQRGDLSQHATPLPTPAVLPGDSPITPTPE) is disordered. Residues Ser176, Ser180, and Ser208 each carry the phosphoserine modification. Positions 215-303 (EQIGKLRSEL…VFLRHERFER (89 aa)) constitute a GAT domain. Positions 321–326 (DLIDMG) are clathrin box. Phosphoserine occurs at positions 355 and 376. Residue Lys385 forms a Glycyl lysine isopeptide (Lys-Gly) (interchain with G-Cter in SUMO2) linkage. The interaction with MYO6 stretch occupies residues 392 to 463 (TDGLAGALDA…ADRLPNLASP (72 aa)). Residues 450 to 492 (RAKAADRLPNLASPSAEGPPRPSPGTAPRRKTQEKDDDMLFAL) are disordered. Ser462 carries the post-translational modification Phosphoserine.

It belongs to the TOM1 family. In terms of assembly, found in a complex with TOLLIP; interacts (via GAT domain) with TOLLIP (via N-terminus); the interactions leads to TOM1-recruitment to endosomes and inhibition of TOLLIP binding to PtdIns(3)P. Interacts (via GAT domain and the C-terminal part of the VHS domain) with UBC/ubiquitin. Interacts (via clathrin box and C-terminus) with clathrin heavy chain. Interacts with MYO6. Interacts with TAX1BP1; CALCOCO2/NDP52 and OPTN; the interaction is indirect and is mediated by MYO6, which acts as a bridge between TOM1 and the three autophagy receptors. Interacts (via C-terminus) with ZFYVE16 (via C-terminus); interaction is required to target TOM1 and clathrin to endosomes. Interacts with LRBA. In terms of processing, monoubiquitinated. As to expression, ubiquitous. In adult brain, it is highly expressed at the mesencephalic level, in the hippocampal formation and medial lemniscus. In cerebellum, it is highly expressed in Purkinje cells and granular layers.

The protein resides in the cytoplasm. It is found in the endosome membrane. It localises to the early endosome membrane. In terms of biological role, adapter protein that plays a role in the intracellular membrane trafficking of ubiquitinated proteins, thereby participating in autophagy, ubiquitination-dependent signaling and receptor recycling pathways. Acts as a MYO6/Myosin VI adapter protein that targets MYO6 to endocytic structures. Together with MYO6, required for autophagosomal delivery of endocytic cargo, the maturation of autophagosomes and their fusion with lysosomes. MYO6 links TOM1 with autophagy receptors, such as TAX1BP1; CALCOCO2/NDP52 and OPTN. Binds to polyubiquitinated proteins via its GAT domain. In a complex with TOLLIP, recruits ubiquitin-conjugated proteins onto early endosomes. The Tom1-Tollip complex may regulate endosomal trafficking by linking polyubiquitinated proteins to clathrin. Mediates clathrin recruitment to early endosomes by ZFYVE16. Modulates binding of TOLLIP to phosphatidylinositol 3-phosphate (PtdIns(3)P) via binding competition; the association with TOLLIP may favor the release of TOLLIP from endosomal membranes, allowing TOLLIP to commit to cargo trafficking. Acts as a phosphatidylinositol 5-phosphate (PtdIns(5)P) effector by binding to PtdIns(5)P, thereby regulating endosomal maturation. PtdIns(5)P-dependent recruitment to signaling endosomes may block endosomal maturation. Also inhibits Toll-like receptor (TLR) signaling and participates in immune receptor recycling. This Mus musculus (Mouse) protein is Target of Myb1 membrane trafficking protein.